Reading from the N-terminus, the 510-residue chain is Putative thymidine phosphorylase (510 aa).

It belongs to the thymidine/pyrimidine-nucleoside phosphorylase family. Type 2 subfamily.

The enzyme catalyses thymidine + phosphate = 2-deoxy-alpha-D-ribose 1-phosphate + thymine. This chain is Putative thymidine phosphorylase, found in Nitrobacter hamburgensis (strain DSM 10229 / NCIMB 13809 / X14).